We begin with the raw amino-acid sequence, 231 residues long: Biosynthetic peptidoglycan transglycosylase (231 aa).

A helical transmembrane segment spans residues 12–34 (AAVLAGLALLLVALAVSYRWVPP).

The protein belongs to the glycosyltransferase 51 family.

It is found in the cell inner membrane. The enzyme catalyses [GlcNAc-(1-&gt;4)-Mur2Ac(oyl-L-Ala-gamma-D-Glu-L-Lys-D-Ala-D-Ala)](n)-di-trans,octa-cis-undecaprenyl diphosphate + beta-D-GlcNAc-(1-&gt;4)-Mur2Ac(oyl-L-Ala-gamma-D-Glu-L-Lys-D-Ala-D-Ala)-di-trans,octa-cis-undecaprenyl diphosphate = [GlcNAc-(1-&gt;4)-Mur2Ac(oyl-L-Ala-gamma-D-Glu-L-Lys-D-Ala-D-Ala)](n+1)-di-trans,octa-cis-undecaprenyl diphosphate + di-trans,octa-cis-undecaprenyl diphosphate + H(+). It participates in cell wall biogenesis; peptidoglycan biosynthesis. Functionally, peptidoglycan polymerase that catalyzes glycan chain elongation from lipid-linked precursors. The chain is Biosynthetic peptidoglycan transglycosylase from Rhodospirillum centenum (strain ATCC 51521 / SW).